Reading from the N-terminus, the 129-residue chain is MAKQPTRARKRVRKQVADGVAHIHASFNNTIVTITDRQGNALSWATAGGSGFRGSRKSTPFAAQVAAERCGEMAKEYGVKNLEVMVKGPGPGRESTIRALNAAGFRITNIVDATPIPHNGCRPPKKRRV.

The protein belongs to the universal ribosomal protein uS11 family. Part of the 30S ribosomal subunit. Interacts with proteins S7 and S18. Binds to IF-3.

In terms of biological role, located on the platform of the 30S subunit, it bridges several disparate RNA helices of the 16S rRNA. Forms part of the Shine-Dalgarno cleft in the 70S ribosome. The polypeptide is Small ribosomal subunit protein uS11 (Photobacterium profundum (strain SS9)).